Here is a 412-residue protein sequence, read N- to C-terminus: WW domain-containing oxidoreductase (412 aa).

The disordered stretch occupies residues 1 to 24 (MAALKYAGMEDTDSEDELPPGWEE). The 34-residue stretch at 16-49 (DELPPGWEERSTKDGWVYYANHEEMKTQWEHPKT) folds into the WW 1 domain. The short motif at 50–55 (GKKKRC) is the Nuclear localization signal element. Positions 57 to 90 (GALPYGWEQETDDKGQIFYVDHINKRKTYFDPRQ) constitute a WW 2 domain. 128 to 134 (GANSGIG) is an NADP(+) binding site. Substrate is bound at residue serine 257. Residue tyrosine 290 is the Proton acceptor of the active site.

Belongs to the short-chain dehydrogenases/reductases (SDR) family.

It is found in the cytoplasm. The protein localises to the mitochondrion. Its subcellular location is the golgi apparatus. The protein resides in the lysosome. Its function is as follows. Putative oxidoreductase. Acts as a tumor suppressor and plays a role in apoptosis. May function synergistically with p53/TP53 to control genotoxic stress-induced cell death. Plays a role in TGFB1 signaling and TGFB1-mediated cell death. May also play a role in tumor necrosis factor (TNF)-mediated cell death. Required for normal bone development. Inhibits Wnt signaling. The chain is WW domain-containing oxidoreductase (wwox) from Danio rerio (Zebrafish).